Here is a 247-residue protein sequence, read N- to C-terminus: Large ribosomal subunit protein uL30 (247 aa).

Belongs to the universal ribosomal protein uL30 family.

This Sus scrofa (Pig) protein is Large ribosomal subunit protein uL30 (RPL7L1).